Reading from the N-terminus, the 72-residue chain is NAD(P)H-quinone oxidoreductase subunit O (72 aa).

This sequence belongs to the complex I NdhO subunit family. In terms of assembly, NDH-1 can be composed of about 15 different subunits; different subcomplexes with different compositions have been identified which probably have different functions.

The protein resides in the cellular thylakoid membrane. It carries out the reaction a plastoquinone + NADH + (n+1) H(+)(in) = a plastoquinol + NAD(+) + n H(+)(out). The catalysed reaction is a plastoquinone + NADPH + (n+1) H(+)(in) = a plastoquinol + NADP(+) + n H(+)(out). Its function is as follows. NDH-1 shuttles electrons from an unknown electron donor, via FMN and iron-sulfur (Fe-S) centers, to quinones in the respiratory and/or the photosynthetic chain. The immediate electron acceptor for the enzyme in this species is believed to be plastoquinone. Couples the redox reaction to proton translocation, and thus conserves the redox energy in a proton gradient. Cyanobacterial NDH-1 also plays a role in inorganic carbon-concentration. The polypeptide is NAD(P)H-quinone oxidoreductase subunit O (Rippkaea orientalis (strain PCC 8801 / RF-1) (Cyanothece sp. (strain PCC 8801))).